The chain runs to 450 residues: Crinkler effector protein 63 (450 aa).

The signal sequence occupies residues 1 to 17 (MVKLFCAIVGAAGSAFP). The LQLFLAK domain stretch occupies residues 18–55 (VDIDAGQSAGDLKDAIKAKNPATITCDAKDLQLSLAKT). Residues 58–117 (GAWLPDDDQAALDLEDGKVHEDIQALIDGEKMKATWTIEDVLTANNMTKRKGRAPKSRQI) form a DWL domain region. An N-linked (GlcNAc...) asparagine glycan is attached at Asn-103. The short motif at 118–124 (HVLVVVP) is the HVLVXXP motif element. Positions 125–450 (EGAFGSASET…RSIPTFSYFS (326 aa)) are effector domain. A Nuclear localization signal (NLS) motif is present at residues 218–224 (QRKRYRR). Asn-342 carries an N-linked (GlcNAc...) asparagine glycan.

Belongs to the Crinkler effector family. Forms a homodimer via an inverted association manner. Forms heterodimers with CRN79 and CRN115.

It is found in the secreted. The protein localises to the host nucleus. It localises to the host nucleoplasm. Secreted effector that, with CRN115, is critical to pathogenesis by modulating host defenses. Induces cell death in plant host cells. Suppresses callose deposition and affects expression of defense-related genes including two salicylic acid (SA) signal-induced and antimicrobial PR genes (PR1 and PR2), and genes involved in jasmonic acid (JA)/ethylene (ET)-mediated defense pathway (ERF1, ORA59, PDF1.2). CRN115 and CRN63 may share the same molecular host targets that are involved in the cell death signal transduction pathway and that their differential activities are dependent on plant nuclear localization or not. Does not affect MAPK activation and BIK1 phosphorylation and acts downstream of the MAPK cascades in PTI signaling. The polypeptide is Crinkler effector protein 63 (Phytophthora sojae (strain P6497) (Soybean stem and root rot agent)).